Consider the following 56-residue polypeptide: Large ribosomal subunit protein bL33 (56 aa).

Belongs to the bacterial ribosomal protein bL33 family.

This is Large ribosomal subunit protein bL33 from Treponema denticola (strain ATCC 35405 / DSM 14222 / CIP 103919 / JCM 8153 / KCTC 15104).